The chain runs to 366 residues: MEDNLPVNVREYQELAKKALPKMAYDYINGGAEDEHTLRENIAAYTRIILRPRVLVDVSKIDMSTTLLGYTMRSPIIVAPTGGHKLAHPEGEKATARAAASCNAIMVLSFSSSCKIEDVASSCNAIRFYQLYVYKNRNVSATLVRRAESCGFKALLLTVDTPMLGRREADIRNKMVFPRSGNLEGLMTIDDHDTTNGSQLERFARATLDPSLSWKDIEWLKSITSMPIFLKGIVTAEDARRAVEAGVAGVIVSNHGARQLDYAPATIAALEEVVRAVAGAVPVLVDGGIRRGTDVFKALALGARAVMXXXPVFFGLAARGEAGARHVIEMLNGELEVAMALCGCRSVGEITRSHVMTEGDRIRSLL.

The 360-residue stretch at 1-360 (MEDNLPVNVR…TRSHVMTEGD (360 aa)) folds into the FMN hydroxy acid dehydrogenase domain. Y27 lines the a 2-oxocarboxylate pocket. Residues 80 to 82 (PTG), S109, 130 to 132 (QLY), and T158 contribute to the FMN site. Y132 is a binding site for a 2-oxocarboxylate. R167 is an a 2-oxocarboxylate binding site. Residues K231 and S253 each contribute to the FMN site. H255 serves as the catalytic Proton acceptor. R258 is an a 2-oxocarboxylate binding site. FMN-binding positions include 286–290 (DGGIR) and 309–310 (XX). Residues 364 to 366 (SLL) carry the Microbody targeting signal motif.

This sequence belongs to the FMN-dependent alpha-hydroxy acid dehydrogenase family. Homotetramer. FMN is required as a cofactor.

Its subcellular location is the peroxisome. It catalyses the reaction a (2S)-2-hydroxycarboxylate + O2 = a 2-oxocarboxylate + H2O2. It participates in lipid metabolism; fatty acid metabolism. Functionally, oxidase that catalyzes the oxidation of a broad range of 2-hydroxyacids to the corresponding 2-oxoacids, with a reduction of O2 to H2O2. May be involved in a general medium- and long-chain fatty acid catabolic pathway such as alpha-oxidation. The sequence is that of Peroxisomal (S)-2-hydroxy-acid oxidase GLO4 (GLO4) from Oryza sativa subsp. indica (Rice).